A 628-amino-acid polypeptide reads, in one-letter code: Chaperone protein HtpG (628 aa).

The a; substrate-binding stretch occupies residues 1 to 340 (MSTETLQKET…SADLPLNVSR (340 aa)). The interval 341-557 (EILQHSKDIE…EHDLSGNLER (217 aa)) is b. The c stretch occupies residues 558-628 (LLKAAGQKTP…FVRRVNAMLA (71 aa)).

This sequence belongs to the heat shock protein 90 family. Homodimer.

The protein localises to the cytoplasm. Its function is as follows. Molecular chaperone. Has ATPase activity. In Methylobacillus flagellatus (strain ATCC 51484 / DSM 6875 / VKM B-1610 / KT), this protein is Chaperone protein HtpG.